Consider the following 229-residue polypeptide: Probable endo-1,4-beta-xylanase A (229 aa).

The signal sequence occupies residues 1 to 18; it reads MVSFKYLFLAASALGALA. Asparagine 30 and asparagine 100 each carry an N-linked (GlcNAc...) asparagine glycan. The GH11 domain occupies 41–229; it reads AGTPSSTGWN…SSGSSSITVY (189 aa). Glutamate 125 functions as the Nucleophile in the catalytic mechanism. Glutamate 216 functions as the Proton donor in the catalytic mechanism.

This sequence belongs to the glycosyl hydrolase 11 (cellulase G) family.

It is found in the secreted. It carries out the reaction Endohydrolysis of (1-&gt;4)-beta-D-xylosidic linkages in xylans.. It functions in the pathway glycan degradation; xylan degradation. Its function is as follows. Endo-1,4-beta-xylanase involved in the hydrolysis of xylan, a major structural heterogeneous polysaccharide found in plant biomass representing the second most abundant polysaccharide in the biosphere, after cellulose. The polypeptide is Probable endo-1,4-beta-xylanase A (xlnA) (Aspergillus clavatus (strain ATCC 1007 / CBS 513.65 / DSM 816 / NCTC 3887 / NRRL 1 / QM 1276 / 107)).